Reading from the N-terminus, the 152-residue chain is 6,7-dimethyl-8-ribityllumazine synthase (152 aa).

5-amino-6-(D-ribitylamino)uracil contacts are provided by residues phenylalanine 22, 56-58 (AFE), and 79-81 (AVI). 84–85 (AT) contributes to the (2S)-2-hydroxy-3-oxobutyl phosphate binding site. Catalysis depends on histidine 87, which acts as the Proton donor. Phenylalanine 112 is a 5-amino-6-(D-ribitylamino)uracil binding site. Arginine 126 contacts (2S)-2-hydroxy-3-oxobutyl phosphate.

Belongs to the DMRL synthase family.

The catalysed reaction is (2S)-2-hydroxy-3-oxobutyl phosphate + 5-amino-6-(D-ribitylamino)uracil = 6,7-dimethyl-8-(1-D-ribityl)lumazine + phosphate + 2 H2O + H(+). Its pathway is cofactor biosynthesis; riboflavin biosynthesis; riboflavin from 2-hydroxy-3-oxobutyl phosphate and 5-amino-6-(D-ribitylamino)uracil: step 1/2. Catalyzes the formation of 6,7-dimethyl-8-ribityllumazine by condensation of 5-amino-6-(D-ribitylamino)uracil with 3,4-dihydroxy-2-butanone 4-phosphate. This is the penultimate step in the biosynthesis of riboflavin. This chain is 6,7-dimethyl-8-ribityllumazine synthase, found in Carboxydothermus hydrogenoformans (strain ATCC BAA-161 / DSM 6008 / Z-2901).